A 474-amino-acid polypeptide reads, in one-letter code: Methylenetetrahydrofolate--tRNA-(uracil-5-)-methyltransferase TrmFO (474 aa).

9–14 lines the FAD pocket; it reads GGGLAG. A disordered region spans residues 425 to 451; sequence PPLERMPRNETGKRLRGPEKAALKKRA. The segment covering 429-451 has biased composition (basic and acidic residues); the sequence is RMPRNETGKRLRGPEKAALKKRA.

The protein belongs to the MnmG family. TrmFO subfamily. The cofactor is FAD.

Its subcellular location is the cytoplasm. It carries out the reaction uridine(54) in tRNA + (6R)-5,10-methylene-5,6,7,8-tetrahydrofolate + NADH + H(+) = 5-methyluridine(54) in tRNA + (6S)-5,6,7,8-tetrahydrofolate + NAD(+). The catalysed reaction is uridine(54) in tRNA + (6R)-5,10-methylene-5,6,7,8-tetrahydrofolate + NADPH + H(+) = 5-methyluridine(54) in tRNA + (6S)-5,6,7,8-tetrahydrofolate + NADP(+). In terms of biological role, catalyzes the folate-dependent formation of 5-methyl-uridine at position 54 (M-5-U54) in all tRNAs. The protein is Methylenetetrahydrofolate--tRNA-(uracil-5-)-methyltransferase TrmFO of Methylorubrum populi (strain ATCC BAA-705 / NCIMB 13946 / BJ001) (Methylobacterium populi).